A 199-amino-acid chain; its full sequence is Pyridoxal 5'-phosphate synthase subunit PdxT (199 aa).

49-51 lines the L-glutamine pocket; it reads GES. The active-site Nucleophile is C81. L-glutamine is bound by residues R110 and 139-140; that span reads IR. Catalysis depends on charge relay system residues H175 and E177.

It belongs to the glutaminase PdxT/SNO family. In the presence of PdxS, forms a dodecamer of heterodimers. Only shows activity in the heterodimer.

It carries out the reaction aldehydo-D-ribose 5-phosphate + D-glyceraldehyde 3-phosphate + L-glutamine = pyridoxal 5'-phosphate + L-glutamate + phosphate + 3 H2O + H(+). The enzyme catalyses L-glutamine + H2O = L-glutamate + NH4(+). It participates in cofactor biosynthesis; pyridoxal 5'-phosphate biosynthesis. Functionally, catalyzes the hydrolysis of glutamine to glutamate and ammonia as part of the biosynthesis of pyridoxal 5'-phosphate. The resulting ammonia molecule is channeled to the active site of PdxS. This is Pyridoxal 5'-phosphate synthase subunit PdxT from Frankia alni (strain DSM 45986 / CECT 9034 / ACN14a).